The sequence spans 228 residues: UPF0056 membrane protein MJ0972 (228 aa).

5 helical membrane-spanning segments follow: residues 22–42 (FYIY…LIPI), 68–88 (VVLL…GITI), 133–153 (VPLA…MILI), 163–183 (GVVV…LSLT), and 201–221 (IMGL…IVGL).

This sequence belongs to the UPF0056 (MarC) family.

It is found in the cell membrane. The chain is UPF0056 membrane protein MJ0972 from Methanocaldococcus jannaschii (strain ATCC 43067 / DSM 2661 / JAL-1 / JCM 10045 / NBRC 100440) (Methanococcus jannaschii).